The chain runs to 358 residues: MKDVLDDNLLEEPAAQYSLFEPESNPNLREKFTFIDLFAGIGGFRIAMQNLGGKCIFSSEWDEQAQKTYEANFGDLPYGDITLEETKAFIPEKFDILCAGFPCQAFSIAGKRGGFEDTRGTLFFDVAEIIRRHQPKAFFLENVKGLKNHDKGRTLKTILNVLREDLGYFVPEPAIVNAKNFGVPQNRERIYIVGFHKSTGVNSFSYPEPLDKIVTFADIREEKTVPTKYYLSTQYIDTLRKHKERHESKGNGFGYEIIPDDGIANAIVVGGMGRERNLVIDHRITDFTPTTNIKGEVNREGIRKMTPREWARLQGFPDSYVIPVSDASAYKQFGNSVAVPAIQATGKKILEKLGNLYD.

The SAM-dependent MTase C5-type domain occupies 32-356 (FTFIDLFAGI…KKILEKLGNL (325 aa)). The active site involves C103.

It belongs to the class I-like SAM-binding methyltransferase superfamily. C5-methyltransferase family. Monomer.

The enzyme catalyses a 2'-deoxycytidine in DNA + S-adenosyl-L-methionine = a 5-methyl-2'-deoxycytidine in DNA + S-adenosyl-L-homocysteine + H(+). In terms of biological role, a methylase that recognizes the double-stranded sequence 5'-CCGG-3', methylates C-2 on both strands, and protects the DNA from cleavage by the HpaII endonuclease. In Haemophilus parainfluenzae, this protein is Type II methyltransferase M.HpaII.